A 250-amino-acid polypeptide reads, in one-letter code: Probable transcriptional regulatory protein Mkms_2298 (250 aa).

Belongs to the TACO1 family.

It is found in the cytoplasm. In Mycobacterium sp. (strain KMS), this protein is Probable transcriptional regulatory protein Mkms_2298.